The sequence spans 152 residues: SsrA-binding protein (152 aa).

Belongs to the SmpB family.

The protein resides in the cytoplasm. In terms of biological role, required for rescue of stalled ribosomes mediated by trans-translation. Binds to transfer-messenger RNA (tmRNA), required for stable association of tmRNA with ribosomes. tmRNA and SmpB together mimic tRNA shape, replacing the anticodon stem-loop with SmpB. tmRNA is encoded by the ssrA gene; the 2 termini fold to resemble tRNA(Ala) and it encodes a 'tag peptide', a short internal open reading frame. During trans-translation Ala-aminoacylated tmRNA acts like a tRNA, entering the A-site of stalled ribosomes, displacing the stalled mRNA. The ribosome then switches to translate the ORF on the tmRNA; the nascent peptide is terminated with the 'tag peptide' encoded by the tmRNA and targeted for degradation. The ribosome is freed to recommence translation, which seems to be the essential function of trans-translation. The sequence is that of SsrA-binding protein from Rickettsia peacockii (strain Rustic).